The primary structure comprises 106 residues: Ferredoxin-2 (106 aa).

2 consecutive 4Fe-4S ferredoxin-type domains span residues Tyr-2–Glu-29 and Asn-30–Leu-59. Residues Cys-8 and Cys-16 each coordinate [3Fe-4S] cluster. Residues Cys-20, Cys-39, Cys-42, and Cys-45 each contribute to the [4Fe-4S] cluster site. Cys-49 serves as a coordination point for [3Fe-4S] cluster. Residues Ala-80–His-106 form a disordered region.

Requires [4Fe-4S] cluster as cofactor. [3Fe-4S] cluster is required as a cofactor.

In terms of biological role, ferredoxins are iron-sulfur proteins that transfer electrons in a wide variety of metabolic reactions. The sequence is that of Ferredoxin-2 from Rhodospirillum rubrum.